The chain runs to 467 residues: Hydroxymethylglutaryl-CoA synthase erg13A (467 aa).

Ala-35 lines the (3S)-3-hydroxy-3-methylglutaryl-CoA pocket. Glu-86 functions as the Proton donor/acceptor in the catalytic mechanism. Residues Cys-118, Thr-160, Ser-209, His-259, Lys-268, Asn-334, and Ser-368 each contribute to the (3S)-3-hydroxy-3-methylglutaryl-CoA site. Residue Cys-118 is the Acyl-thioester intermediate of the active site. His-259 functions as the Proton donor/acceptor in the catalytic mechanism.

The protein belongs to the thiolase-like superfamily. HMG-CoA synthase family.

The catalysed reaction is acetoacetyl-CoA + acetyl-CoA + H2O = (3S)-3-hydroxy-3-methylglutaryl-CoA + CoA + H(+). It participates in metabolic intermediate biosynthesis; (R)-mevalonate biosynthesis; (R)-mevalonate from acetyl-CoA: step 2/3. In terms of biological role, hydroxymethylglutaryl-CoA synthase; part of the first module of ergosterol biosynthesis pathway that includes the early steps of the pathway, conserved across all eukaryotes, and which results in the formation of mevalonate from acetyl-coenzyme A (acetyl-CoA). Erg13A and erg13B condense acetyl-CoA with acetoacetyl-CoA to form hydroxymethylglutaryl-CoA (HMG-CoA). The first module starts with the action of the cytosolic acetyl-CoA acetyltransferase erg10B that catalyzes the formation of acetoacetyl-CoA. The hydroxymethylglutaryl-CoA synthases erg13A and erg13B then condense acetyl-CoA with acetoacetyl-CoA to form HMG-CoA. The rate-limiting step of the early module is the reduction to mevalonate by the 3-hydroxy-3-methylglutaryl-coenzyme A (HMG-CoA) reductases hmg1 and hmg2. Mevalonate is also a precursor for the extracellular siderophore triacetylfusarinine C (TAFC). This is Hydroxymethylglutaryl-CoA synthase erg13A from Aspergillus fumigatus (strain ATCC MYA-4609 / CBS 101355 / FGSC A1100 / Af293) (Neosartorya fumigata).